Consider the following 173-residue polypeptide: Crossover junction endodeoxyribonuclease RuvC (173 aa).

Residues Asp-8, Glu-67, and Asp-139 contribute to the active site. Mg(2+) is bound by residues Asp-8, Glu-67, and Asp-139.

This sequence belongs to the RuvC family. In terms of assembly, homodimer which binds Holliday junction (HJ) DNA. The HJ becomes 2-fold symmetrical on binding to RuvC with unstacked arms; it has a different conformation from HJ DNA in complex with RuvA. In the full resolvosome a probable DNA-RuvA(4)-RuvB(12)-RuvC(2) complex forms which resolves the HJ. Mg(2+) serves as cofactor.

The protein resides in the cytoplasm. The catalysed reaction is Endonucleolytic cleavage at a junction such as a reciprocal single-stranded crossover between two homologous DNA duplexes (Holliday junction).. Functionally, the RuvA-RuvB-RuvC complex processes Holliday junction (HJ) DNA during genetic recombination and DNA repair. Endonuclease that resolves HJ intermediates. Cleaves cruciform DNA by making single-stranded nicks across the HJ at symmetrical positions within the homologous arms, yielding a 5'-phosphate and a 3'-hydroxyl group; requires a central core of homology in the junction. The consensus cleavage sequence is 5'-(A/T)TT(C/G)-3'. Cleavage occurs on the 3'-side of the TT dinucleotide at the point of strand exchange. HJ branch migration catalyzed by RuvA-RuvB allows RuvC to scan DNA until it finds its consensus sequence, where it cleaves and resolves the cruciform DNA. Plays a role in recovery after DNA ADP-ribosylation, probably via replication fork reversal. This Escherichia coli O127:H6 (strain E2348/69 / EPEC) protein is Crossover junction endodeoxyribonuclease RuvC.